Consider the following 155-residue polypeptide: Cytochrome c-550 (155 aa).

A signal peptide spans 1 to 20; that stretch reads MKISIYATLAAITLALPAAA. Position 21 is a pyrrolidone carboxylic acid (Q21). Residues C35, C38, H39, and M120 each contribute to the heme c site. A propeptide spanning residues 150 to 155 is cleaved from the precursor; sequence AEGESN.

In terms of processing, binds 1 heme c group covalently per subunit.

In Paracoccus denitrificans, this protein is Cytochrome c-550 (cycA).